Reading from the N-terminus, the 337-residue chain is Casein kinase I isoform alpha (337 aa).

Residues 17–285 (YKLVRKIGSG…YLRQLFRILF (269 aa)) form the Protein kinase domain. Residues 23 to 31 (IGSGSFGDI) and lysine 46 contribute to the ATP site. Catalysis depends on aspartate 136, which acts as the Proton acceptor. Over residues 309 to 325 (AASSSGQGQQAQTPTGK) the composition is skewed to low complexity. The disordered stretch occupies residues 309–337 (AASSSGQGQQAQTPTGKQTDKSKSNMKGF).

The protein belongs to the protein kinase superfamily. CK1 Ser/Thr protein kinase family. Casein kinase I subfamily. In terms of processing, autophosphorylated.

The protein resides in the cytoplasm. It is found in the cytoskeleton. It localises to the microtubule organizing center. Its subcellular location is the centrosome. The protein localises to the chromosome. The protein resides in the centromere. It is found in the kinetochore. It localises to the nucleus speckle. Its subcellular location is the cilium basal body. The protein localises to the spindle. The catalysed reaction is L-seryl-[protein] + ATP = O-phospho-L-seryl-[protein] + ADP + H(+). It catalyses the reaction L-threonyl-[protein] + ATP = O-phospho-L-threonyl-[protein] + ADP + H(+). In terms of biological role, casein kinases are operationally defined by their preferential utilization of acidic proteins such as caseins as substrates. It can phosphorylate a large number of proteins. Participates in Wnt signaling. May play a role in segregating chromosomes during mitosis. May play a role in keratin cytoskeleton disassembly. In Gallus gallus (Chicken), this protein is Casein kinase I isoform alpha (CSNK1A1).